The following is a 267-amino-acid chain: 14-3-3-like protein GF14 phi (267 aa).

Ala2 carries the N-acetylalanine modification. 2 positions are modified to phosphoserine: Ser73 and Ser196. At Thr217 the chain carries Phosphothreonine. The interval 244 to 267 (MQDESPEEIKEAAAPKPAEEQKEI) is disordered. A Phosphoserine modification is found at Ser248. Residues 250-267 (EEIKEAAAPKPAEEQKEI) show a composition bias toward basic and acidic residues.

It belongs to the 14-3-3 family. Interacts with FD. Interacts with CINV1.

The protein localises to the nucleus. It is found in the cytoplasm. Its function is as follows. Is associated with a DNA binding complex that binds to the G box, a well-characterized cis-acting DNA regulatory element found in plant genes. The polypeptide is 14-3-3-like protein GF14 phi (GRF4) (Arabidopsis thaliana (Mouse-ear cress)).